A 109-amino-acid polypeptide reads, in one-letter code: Movement protein (109 aa).

A disordered region spans residues 1-28 (MDSFGRAPPLWPQSALPRVPGAAPSSSG). A helical membrane pass occupies residues 34 to 54 (VGEIAIFTFVAVLALYLLWSW).

This sequence belongs to the mastrevirus movement protein family. In terms of assembly, interacts with the capsid protein (CP). Part of a MP-CP-viral DNA complex.

It localises to the host membrane. In terms of biological role, involved in the viral transport within, and between cells. This chain is Movement protein, found in Sugarcane streak virus (isolate South Africa) (SSV).